A 293-amino-acid polypeptide reads, in one-letter code: D-psicose 3-epimerase (293 aa).

Residues Tyr-6 and Ala-107 each contribute to the substrate site. Glu-150 functions as the Proton donor/acceptor in the catalytic mechanism. Glu-150 contacts Mn(2+). Substrate-binding positions include Glu-156 and 183 to 186 (DTFH). Residues Asp-183 and His-209 each contribute to the Mn(2+) site. Position 215 (Arg-215) interacts with substrate. Residue Glu-244 is the Proton donor/acceptor of the active site. Mn(2+) is bound at residue Glu-244.

The protein belongs to the hyi family. In terms of assembly, homotetramer. Mn(2+) serves as cofactor. The cofactor is Co(2+).

It carries out the reaction D-allulose = keto-D-fructose. Functionally, involved in the biosynthesis of D-psicose. Catalyzes the reversible epimerization of D-fructose at the C3 position to yield D-psicose. The enzyme is highly specific for D-psicose and shows very low activity with D-tagatose. This chain is D-psicose 3-epimerase, found in Ruminiclostridium cellulolyticum (strain ATCC 35319 / DSM 5812 / JCM 6584 / H10) (Clostridium cellulolyticum).